A 306-amino-acid chain; its full sequence is Pantothenate kinase (306 aa).

91–98 (GSVAVGKS) contributes to the ATP binding site.

The protein belongs to the prokaryotic pantothenate kinase family.

It is found in the cytoplasm. It carries out the reaction (R)-pantothenate + ATP = (R)-4'-phosphopantothenate + ADP + H(+). It participates in cofactor biosynthesis; coenzyme A biosynthesis; CoA from (R)-pantothenate: step 1/5. This is Pantothenate kinase from Streptococcus pyogenes serotype M49 (strain NZ131).